A 225-amino-acid polypeptide reads, in one-letter code: Small ribosomal subunit protein uS3 (225 aa).

In terms of domain architecture, KH type-2 spans 38–106 (IRKFIQSRFS…PVNLNIIEVK (69 aa)).

This sequence belongs to the universal ribosomal protein uS3 family. Part of the 30S ribosomal subunit. Forms a tight complex with proteins S10 and S14.

Its function is as follows. Binds the lower part of the 30S subunit head. Binds mRNA in the 70S ribosome, positioning it for translation. This is Small ribosomal subunit protein uS3 from Leptospira borgpetersenii serovar Hardjo-bovis (strain JB197).